The primary structure comprises 362 residues: Phosphoserine aminotransferase (362 aa).

R42 contacts L-glutamate. Pyridoxal 5'-phosphate is bound by residues A76 to R77, W102, T153, D174, and Q197. The residue at position 198 (K198) is an N6-(pyridoxal phosphate)lysine. A pyridoxal 5'-phosphate-binding site is contributed by N239–T240.

This sequence belongs to the class-V pyridoxal-phosphate-dependent aminotransferase family. SerC subfamily. Homodimer. Pyridoxal 5'-phosphate is required as a cofactor.

It localises to the cytoplasm. It carries out the reaction O-phospho-L-serine + 2-oxoglutarate = 3-phosphooxypyruvate + L-glutamate. The catalysed reaction is 4-(phosphooxy)-L-threonine + 2-oxoglutarate = (R)-3-hydroxy-2-oxo-4-phosphooxybutanoate + L-glutamate. Its pathway is amino-acid biosynthesis; L-serine biosynthesis; L-serine from 3-phospho-D-glycerate: step 2/3. The protein operates within cofactor biosynthesis; pyridoxine 5'-phosphate biosynthesis; pyridoxine 5'-phosphate from D-erythrose 4-phosphate: step 3/5. Its function is as follows. Catalyzes the reversible conversion of 3-phosphohydroxypyruvate to phosphoserine and of 3-hydroxy-2-oxo-4-phosphonooxybutanoate to phosphohydroxythreonine. This is Phosphoserine aminotransferase from Xenorhabdus nematophila (strain ATCC 19061 / DSM 3370 / CCUG 14189 / LMG 1036 / NCIMB 9965 / AN6).